The chain runs to 405 residues: S-adenosylmethionine synthase (405 aa).

ATP is bound at residue 141–146 (GQGSVD).

Belongs to the AdoMet synthase 2 family. It depends on Mg(2+) as a cofactor.

It carries out the reaction L-methionine + ATP + H2O = S-adenosyl-L-methionine + phosphate + diphosphate. It participates in amino-acid biosynthesis; S-adenosyl-L-methionine biosynthesis; S-adenosyl-L-methionine from L-methionine: step 1/1. Functionally, catalyzes the formation of S-adenosylmethionine from methionine and ATP. The polypeptide is S-adenosylmethionine synthase (Methanococcus maripaludis (strain C6 / ATCC BAA-1332)).